A 361-amino-acid chain; its full sequence is Pyruvate dehydrogenase E1 component subunit beta, mitochondrial (361 aa).

The transit peptide at 1–27 (MAVNGCMRLLRNGLTSACALEQSVRRL) directs the protein to the mitochondrion. Glutamate 90 provides a ligand contact to thiamine diphosphate. Isoleucine 143, alanine 191, valine 192, aspartate 194, and asparagine 196 together coordinate K(+).

As to quaternary structure, heterotetramer of two PDHA1 and two PDHB subunits. The heterotetramer interacts with DLAT, and is part of the multimeric pyruvate dehydrogenase complex that contains multiple copies of pyruvate dehydrogenase (E1), dihydrolipoamide acetyltransferase (DLAT, E2) and lipoamide dehydrogenase (DLD, E3). Thiamine diphosphate is required as a cofactor.

It localises to the mitochondrion matrix. It carries out the reaction N(6)-[(R)-lipoyl]-L-lysyl-[protein] + pyruvate + H(+) = N(6)-[(R)-S(8)-acetyldihydrolipoyl]-L-lysyl-[protein] + CO2. Functionally, the pyruvate dehydrogenase complex catalyzes the overall conversion of pyruvate to acetyl-CoA and CO(2), and thereby links the glycolytic pathway to the tricarboxylic cycle. This chain is Pyruvate dehydrogenase E1 component subunit beta, mitochondrial, found in Ascaris suum (Pig roundworm).